The primary structure comprises 292 residues: Large ribosomal subunit protein bL19m (292 aa).

Residues 39–68 are disordered; that stretch reads GPGRRQITGPSEPGVFQPPPKPVIVDKRGP. Residue Ser-77 is modified to Phosphoserine.

The protein belongs to the bacterial ribosomal protein bL19 family. As to quaternary structure, component of the mitochondrial ribosome large subunit (39S) which comprises a 16S rRNA and about 50 distinct proteins.

Its subcellular location is the mitochondrion. In Bos taurus (Bovine), this protein is Large ribosomal subunit protein bL19m (MRPL19).